The primary structure comprises 131 residues: MPVTDSIADYITRIRNAGRAKNKTTDIPYSKLRENLSQLLVEKGYIKNFTVITTEKFPFLRIDLKYTAHGDPAIKEISRVSKPGRRVYDGKDIKKYLGGLGLYILSSSKGVITDKEARAQGVGGEILFRIY.

It belongs to the universal ribosomal protein uS8 family. As to quaternary structure, part of the 30S ribosomal subunit. Contacts proteins S5 and S12.

Functionally, one of the primary rRNA binding proteins, it binds directly to 16S rRNA central domain where it helps coordinate assembly of the platform of the 30S subunit. This chain is Small ribosomal subunit protein uS8, found in Pelodictyon phaeoclathratiforme (strain DSM 5477 / BU-1).